A 359-amino-acid polypeptide reads, in one-letter code: Tropomodulin-1 (359 aa).

Positions 36-61 (ELDPDNALLPAGLRQKDQTTKAPTGP) are disordered. Residues 39–138 (PDNALLPAGL…CDIAAILGMH (100 aa)) form a tropomyosin-binding region.

The protein belongs to the tropomodulin family. As to quaternary structure, binds to the N-terminus of tropomyosin and to actin. Interacts with FLII. In terms of tissue distribution, highly expressed in the erythrocyte, heart and skeletal muscle.

It is found in the cytoplasm. Its subcellular location is the cytoskeleton. Blocks the elongation and depolymerization of the actin filaments at the pointed end. The Tmod/TM complex contributes to the formation of the short actin protofilament, which in turn defines the geometry of the membrane skeleton. May play an important role in regulating the organization of actin filaments by preferentially binding to a specific tropomyosin isoform at its N-terminus. The sequence is that of Tropomodulin-1 (TMOD1) from Homo sapiens (Human).